Consider the following 334-residue polypeptide: Trans-1,2-dihydrobenzene-1,2-diol dehydrogenase (334 aa).

It belongs to the Gfo/Idh/MocA family. Homodimer. Small intestine.

It catalyses the reaction (1R,2R)-1,2-dihydrobenzene-1,2-diol + NADP(+) = catechol + NADPH + H(+). It carries out the reaction D-xylose + NADP(+) = D-xylono-1,5-lactone + NADPH + H(+). This chain is Trans-1,2-dihydrobenzene-1,2-diol dehydrogenase (DHDH), found in Homo sapiens (Human).